Consider the following 200-residue polypeptide: HVA22-like protein k (200 aa).

The tract at residues 176-200 (LGEIANGSPVSETNSDSESDSNHED) is disordered.

It belongs to the DP1 family.

This chain is HVA22-like protein k (HVA22K), found in Arabidopsis thaliana (Mouse-ear cress).